Here is a 295-residue protein sequence, read N- to C-terminus: Protoheme IX farnesyltransferase (295 aa).

The next 9 helical transmembrane spans lie at 27-46 (IMYLVVLTGITGMIIAPGSI), 50-72 (IAIISTLCIALGSGAAGAINMWY), 93-115 (ISKSSAIELGLVLSVISVTVMMI), 119-136 (YISGILLAISIGFYSFAY), 148-168 (IVIGGIAGAIPPIIGWTSVTS), 175-195 (LILFLIIFMWTPPHFWALSLL), 219-239 (VHILVYSIVLFIITLLPGLFL), 244-264 (LYEICAIPLGITFLFHAFKVF), and 275-295 (MFTYSVAYLFILFICIILASF).

It belongs to the UbiA prenyltransferase family. Protoheme IX farnesyltransferase subfamily.

It localises to the cell inner membrane. The catalysed reaction is heme b + (2E,6E)-farnesyl diphosphate + H2O = Fe(II)-heme o + diphosphate. It participates in porphyrin-containing compound metabolism; heme O biosynthesis; heme O from protoheme: step 1/1. Converts heme B (protoheme IX) to heme O by substitution of the vinyl group on carbon 2 of heme B porphyrin ring with a hydroxyethyl farnesyl side group. This chain is Protoheme IX farnesyltransferase, found in Ehrlichia canis (strain Jake).